A 214-amino-acid chain; its full sequence is MNIIDLGLIDFDEAYSIQERLAAEVFAGSGAETLLLLEHPPVYTIGSGGDEGNILDTAIEVRRINRGGDVTYHGPGQLVGYPVIDLARRGCDLHRYLRFIEELLMLVVADFRVAAFRSPGRTGVWTDQGKLASIGVGVRRWVTMHGFALNVTTDLTPFTRINPCGMAGCPVTSLEAEVGGNVKMIEVKARVGARFEGFLDEFMPLRDSEKDRGF.

Positions 28-203 (GSGAETLLLL…RFEGFLDEFM (176 aa)) constitute a BPL/LPL catalytic domain. Substrate contacts are provided by residues 66 to 73 (RGGDVTYH), 133 to 135 (SIG), and 146 to 148 (GFA). Residue cysteine 164 is the Acyl-thioester intermediate of the active site.

Belongs to the LipB family.

Its subcellular location is the cytoplasm. The catalysed reaction is octanoyl-[ACP] + L-lysyl-[protein] = N(6)-octanoyl-L-lysyl-[protein] + holo-[ACP] + H(+). The protein operates within protein modification; protein lipoylation via endogenous pathway; protein N(6)-(lipoyl)lysine from octanoyl-[acyl-carrier-protein]: step 1/2. Functionally, catalyzes the transfer of endogenously produced octanoic acid from octanoyl-acyl-carrier-protein onto the lipoyl domains of lipoate-dependent enzymes. Lipoyl-ACP can also act as a substrate although octanoyl-ACP is likely to be the physiological substrate. This Geotalea uraniireducens (strain Rf4) (Geobacter uraniireducens) protein is Octanoyltransferase.